A 2835-amino-acid polypeptide reads, in one-letter code: Vanchrobactin synthetase VabF (2835 aa).

Residues 16–452 (EDQWPLIGTQ…IPPSEKQQIT (437 aa)) form a condensation 1 region. The segment at 473–880 (QQTVESKPNE…GRCDHQIKIR (408 aa)) is adenylation 1. Residues 988–1062 (APITQPEQLL…MMAGQMVPLQ (75 aa)) form the Carrier 1 domain. At serine 1023 the chain carries O-(pantetheine 4'-phosphoryl)serine. 2 condensation regions span residues 1081-1499 (WFEE…KIQQ) and 1539-1961 (DVLP…EWDL). The segment at 1992-2394 (QQQRSPHQLA…GRSDDQIKIR (403 aa)) is adenylation 2. Residues 2503–2578 (NAHPGLETQL…KLASLLLDDD (76 aa)) form the Carrier 2 domain. The residue at position 2538 (serine 2538) is an O-(pantetheine 4'-phosphoryl)serine. The interval 2601 to 2821 (ALFCVNSASG…APENVRQIGE (221 aa)) is thioesterase.

The protein belongs to the NRP synthetase family. It depends on pantetheine 4'-phosphate as a cofactor.

It catalyses the reaction holo-[peptidyl-carrier protein] + L-arginine + ATP = L-arginyl-[peptidyl-carrier protein] + AMP + diphosphate. The catalysed reaction is holo-[peptidyl-carrier protein] + L-serine + ATP = L-seryl-[peptidyl-carrier protein] + AMP + diphosphate. It functions in the pathway siderophore biosynthesis. Involved in the synthesis of the siderophore vanchrobactin. Probably adenylates L-arginine via its first adenylation domain and loads it onto its first peptidyl carrier domain via a thioester linkage to the phosphopanthetheine moiety. In addition, may adenylate L-serine via its second adenylation domain and loads it onto its second peptidyl carrier domain via a thioester linkage to the phosphopanthetheine moiety. The thioesterase domain may release vanchrobactin after condensation of the siderophore components. This chain is Vanchrobactin synthetase VabF, found in Vibrio anguillarum (Listonella anguillarum).